We begin with the raw amino-acid sequence, 809 residues long: Glycerol-3-phosphate acyltransferase (809 aa).

Positions 306-311 (HRSHMD) match the HXXXXD motif motif.

This sequence belongs to the GPAT/DAPAT family.

Its subcellular location is the cell inner membrane. It catalyses the reaction sn-glycerol 3-phosphate + an acyl-CoA = a 1-acyl-sn-glycero-3-phosphate + CoA. It functions in the pathway phospholipid metabolism; CDP-diacylglycerol biosynthesis; CDP-diacylglycerol from sn-glycerol 3-phosphate: step 1/3. The protein is Glycerol-3-phosphate acyltransferase of Vibrio vulnificus (strain CMCP6).